The following is a 247-amino-acid chain: Coproheme decarboxylase (247 aa).

Residues Arg-129, 143-147 (YPMDK), His-170, Gln-183, and Ser-221 each bind Fe-coproporphyrin III. Residue Tyr-143 is part of the active site.

The protein belongs to the ChdC family. Type 1 subfamily. Requires Fe-coproporphyrin III as cofactor.

It catalyses the reaction Fe-coproporphyrin III + 2 H2O2 + 2 H(+) = heme b + 2 CO2 + 4 H2O. The catalysed reaction is Fe-coproporphyrin III + H2O2 + H(+) = harderoheme III + CO2 + 2 H2O. It carries out the reaction harderoheme III + H2O2 + H(+) = heme b + CO2 + 2 H2O. Its pathway is porphyrin-containing compound metabolism; protoheme biosynthesis. Functionally, involved in coproporphyrin-dependent heme b biosynthesis. Catalyzes the decarboxylation of Fe-coproporphyrin III (coproheme) to heme b (protoheme IX), the last step of the pathway. The reaction occurs in a stepwise manner with a three-propionate intermediate. This Bacillus cereus (strain AH820) protein is Coproheme decarboxylase.